Consider the following 241-residue polypeptide: NAD-dependent protein deacylase (241 aa).

Positions 1-237 (MNFPYRNIVV…PKLVDEILAL (237 aa)) constitute a Deacetylase sirtuin-type domain. 13 to 32 (GAGISAESGIQTFRAQDGLW) is an NAD(+) binding site. 2 residues coordinate substrate: tyrosine 57 and arginine 60. 94 to 97 (QNID) is an NAD(+) binding site. Histidine 112 (proton acceptor) is an active-site residue. Zn(2+) is bound by residues cysteine 120 and cysteine 139. NAD(+) contacts are provided by residues 179–181 (GTS), 205–207 (NLE), and alanine 223.

The protein belongs to the sirtuin family. Class III subfamily. In terms of assembly, monomer. It depends on Zn(2+) as a cofactor.

It localises to the cytoplasm. The protein resides in the host cytoplasm. It is found in the host cytosol. The protein localises to the host nucleus. It carries out the reaction N(6)-acetyl-L-lysyl-[protein] + NAD(+) + H2O = 2''-O-acetyl-ADP-D-ribose + nicotinamide + L-lysyl-[protein]. The catalysed reaction is N(6)-succinyl-L-lysyl-[protein] + NAD(+) + H2O = 2''-O-succinyl-ADP-D-ribose + nicotinamide + L-lysyl-[protein]. In terms of biological role, NAD-dependent lysine deacetylase and desuccinylase that specifically removes acetyl and succinyl groups on target proteins. Modulates the activities of several proteins which are inactive in their acylated form. In the intracellular pathogen V.parahaemolyticus, this enzyme regulates host response during infection by induction of host histone deacetylation; it specifically causes deacetylation of histone lysine residues H3K56, H3K9, H3K18 and H4K16 which results in transcriptional repression of several host genes involved in epigenetic regulation, immune response, and autophagy. The protein is NAD-dependent protein deacylase of Vibrio parahaemolyticus serotype O3:K6 (strain RIMD 2210633).